A 182-amino-acid polypeptide reads, in one-letter code: Small ribosomal subunit protein uS4c (182 aa).

The S4 RNA-binding domain maps to 82–143 (MRLDNILFRL…KERSKVLIQN (62 aa)).

The protein belongs to the universal ribosomal protein uS4 family. Part of the 30S ribosomal subunit. Contacts protein S5. The interaction surface between S4 and S5 is involved in control of translational fidelity.

The protein localises to the plastid. Its subcellular location is the chloroplast. Its function is as follows. One of the primary rRNA binding proteins, it binds directly to 16S rRNA where it nucleates assembly of the body of the 30S subunit. In terms of biological role, with S5 and S12 plays an important role in translational accuracy. The polypeptide is Small ribosomal subunit protein uS4c (rps4) (Neomarica sp. (strain Lejeune 1997)).